The following is a 450-amino-acid chain: Protein tweety homolog 1 (450 aa).

Residues 1–43 (MGAPPGYRPSAWVHLLHQLPRADFQLRPVPSGFAPRDQEYQQA) lie on the Extracellular side of the membrane. Residues 44-64 (LLLVAALAGLGLGLSLIFIAV) traverse the membrane as a helical segment. At 65 to 88 (YLIRFCCCRPPEPHGAKSPPPGGG) the chain is on the cytoplasmic side. Residues 89 to 109 (CVTWSCIAALLVGCAGIGIGF) form a helical membrane-spanning segment. At 110-214 (YGNSETSDGV…DVTFVEEYRW (105 aa)) the chain is on the extracellular side. Residue Asn-130 is glycosylated (N-linked (GlcNAc...) asparagine). The chain crosses the membrane as a helical span at residues 215 to 235 (LAYVLLLLLVLLVCLFTLLGL). At 236 to 240 (AKQSK) the chain is on the cytoplasmic side. Residues 241–261 (WLVVVMTAMSLLVLVLSWGSM) traverse the membrane as a helical segment. At 262 to 390 (GLEAATAVGL…LRGLCEDALE (129 aa)) the chain is on the extracellular side. 2 disulfide bridges follow: Cys-275–Cys-385 and Cys-303–Cys-370. Residues Asn-284 and Asn-355 are each glycosylated (N-linked (GlcNAc...) asparagine). A helical transmembrane segment spans residues 391 to 411 (GLLFLMLFSLLSAGALATTLC). Residues 412–450 (SLPRAWALFPPSDDYDDTDDDDPFNPQESKRFVQWQSSI) lie on the Cytoplasmic side of the membrane. Residues 428–450 (DTDDDDPFNPQESKRFVQWQSSI) form a disordered region. Ser-440 carries the phosphoserine modification.

The protein belongs to the tweety family. In terms of assembly, homotetramer; disulfide-linked. Homodimer. Post-translationally, N-glycosylated. Contains high-mannose, hybrid and complex oligosaccharides. As to expression, expressed in the astrocytes (at protein level). Restricted mainly to neural tissues. Strongly expressed in brain and eye.

Its subcellular location is the cell membrane. The catalysed reaction is chloride(in) = chloride(out). It carries out the reaction L-glutamate(out) = L-glutamate(in). With respect to regulation, inhibited by (4-[(2-butyl-6,7-dichloro-2- cyclopentyl-2,3-dihydro-1-oxo-1H-inden-5-yl)oxy]butanoic acid). Functionally, calcium-independent, swelling-dependent volume-regulated anion channel (VRAC-swell) which plays a pivotal role in the process of regulatory volume decrease (RVD) in the brain through the efflux of anions like chloride and organic osmolytes like glutamate. In Mus musculus (Mouse), this protein is Protein tweety homolog 1 (Ttyh1).